A 133-amino-acid polypeptide reads, in one-letter code: Small ribosomal subunit protein uS11 (133 aa).

This sequence belongs to the universal ribosomal protein uS11 family. In terms of assembly, part of the 30S ribosomal subunit. Interacts with proteins S7 and S18. Binds to IF-3.

Located on the platform of the 30S subunit, it bridges several disparate RNA helices of the 16S rRNA. Forms part of the Shine-Dalgarno cleft in the 70S ribosome. The polypeptide is Small ribosomal subunit protein uS11 (Ralstonia pickettii (strain 12J)).